We begin with the raw amino-acid sequence, 348 residues long: Isopentenyl-diphosphate delta-isomerase (348 aa).

9-10 (RK) contributes to the substrate binding site. FMN is bound by residues 68-70 (AMT), serine 98, and asparagine 127. Glutamine 157 serves as a coordination point for substrate. Glutamate 158 is a Mg(2+) binding site. FMN-binding positions include lysine 188, serine 213, threonine 218, and 286–287 (AG).

The protein belongs to the IPP isomerase type 2 family. Homooctamer. Dimer of tetramers. FMN serves as cofactor. Requires NADPH as cofactor. The cofactor is Mg(2+).

Its subcellular location is the cytoplasm. It catalyses the reaction isopentenyl diphosphate = dimethylallyl diphosphate. Involved in the biosynthesis of isoprenoids. Catalyzes the 1,3-allylic rearrangement of the homoallylic substrate isopentenyl (IPP) to its allylic isomer, dimethylallyl diphosphate (DMAPP). In Limosilactobacillus reuteri subsp. reuteri (strain JCM 1112) (Lactobacillus reuteri), this protein is Isopentenyl-diphosphate delta-isomerase.